The following is a 354-amino-acid chain: Uroporphyrinogen decarboxylase (354 aa).

Substrate-binding positions include 27 to 31, Asp-77, Tyr-154, Thr-209, and His-327; that span reads RQAGR.

It belongs to the uroporphyrinogen decarboxylase family. As to quaternary structure, homodimer.

It is found in the cytoplasm. It carries out the reaction uroporphyrinogen III + 4 H(+) = coproporphyrinogen III + 4 CO2. It participates in porphyrin-containing compound metabolism; protoporphyrin-IX biosynthesis; coproporphyrinogen-III from 5-aminolevulinate: step 4/4. Its function is as follows. Catalyzes the decarboxylation of four acetate groups of uroporphyrinogen-III to yield coproporphyrinogen-III. The protein is Uroporphyrinogen decarboxylase of Klebsiella pneumoniae (strain 342).